A 494-amino-acid polypeptide reads, in one-letter code: Glutamyl-tRNA(Gln) amidotransferase subunit A (494 aa).

Catalysis depends on charge relay system residues Lys88 and Ser163. Catalysis depends on Ser187, which acts as the Acyl-ester intermediate.

It belongs to the amidase family. GatA subfamily. Heterotrimer of A, B and C subunits.

The catalysed reaction is L-glutamyl-tRNA(Gln) + L-glutamine + ATP + H2O = L-glutaminyl-tRNA(Gln) + L-glutamate + ADP + phosphate + H(+). Functionally, allows the formation of correctly charged Gln-tRNA(Gln) through the transamidation of misacylated Glu-tRNA(Gln) in organisms which lack glutaminyl-tRNA synthetase. The reaction takes place in the presence of glutamine and ATP through an activated gamma-phospho-Glu-tRNA(Gln). This is Glutamyl-tRNA(Gln) amidotransferase subunit A from Corynebacterium diphtheriae (strain ATCC 700971 / NCTC 13129 / Biotype gravis).